The chain runs to 161 residues: Probable endopeptidase HI_1314 (161 aa).

An N-terminal signal peptide occupies residues 1–18; that stretch reads MKVYKSFLIATASLFLFA. Residue cysteine 19 is the site of N-palmitoyl cysteine attachment. Cysteine 19 carries S-diacylglycerol cysteine lipidation. A NlpC/P60 domain is found at 39–161; sequence IMAIAMLSEQ…SKAFWQVRRI (123 aa). The active-site Nucleophile is cysteine 69. The active-site Proton acceptor is histidine 122. The active site involves histidine 134.

The protein belongs to the peptidase C40 family.

It is found in the cell membrane. In Haemophilus influenzae (strain ATCC 51907 / DSM 11121 / KW20 / Rd), this protein is Probable endopeptidase HI_1314.